Consider the following 331-residue polypeptide: Smad-related protein daf-14 (331 aa).

In terms of domain architecture, MH2 spans 134–331 (WCTIFYYELT…NERPEIGSRS (198 aa)). Residues 168-187 (ECRMSLTSQPSSRNSKSSQI) are disordered. Residues 175–185 (SQPSSRNSKSS) show a composition bias toward low complexity.

As to quaternary structure, interacts with R-SMAD daf-8 and co-SMAD daf-3. Interacts with daf-3 in a daf-8 dependent manner.

Functionally, probably an atypical receptor-regulated SMAD (R-SMAD) that is an intracellular signal transducer and transcriptional modulator activated by TGF-beta-like daf-7 signaling. Plays a role in TGF-beta-like daf-7 signaling in regulating entry into a developmentally arrested larval state known as dauer, in response to harsh environmental conditions; partially redundant with R-SMAD daf-8. This is Smad-related protein daf-14 from Caenorhabditis elegans.